Here is a 173-residue protein sequence, read N- to C-terminus: NADH-ubiquinone oxidoreductase chain 6 (173 aa).

5 consecutive transmembrane segments (helical) span residues 1 to 21 (MTYF…AVAS), 27 to 47 (YGVV…LSLG), 48 to 68 (VSFV…VVFV), 87 to 107 (VVGY…VGGF), and 139 to 159 (CGVG…FVVL).

The protein belongs to the complex I subunit 6 family.

Its subcellular location is the mitochondrion membrane. The catalysed reaction is a ubiquinone + NADH + 5 H(+)(in) = a ubiquinol + NAD(+) + 4 H(+)(out). Core subunit of the mitochondrial membrane respiratory chain NADH dehydrogenase (Complex I) that is believed to belong to the minimal assembly required for catalysis. Complex I functions in the transfer of electrons from NADH to the respiratory chain. The immediate electron acceptor for the enzyme is believed to be ubiquinone. The chain is NADH-ubiquinone oxidoreductase chain 6 (MT-ND6) from Aethia pygmaea (Whiskered auklet).